The chain runs to 110 residues: MKKILLIASMTAGLTACASSPAPEEDSRLKEAYSACINTAQGSPEKIEACQSVLNVLKKERRHQQFANEESVRVLDYQQCIQATRTGNDQAVKADCDKVWQEIRSHNNVQ.

Residues 1–16 (MKKILLIASMTAGLTA) form the signal peptide. Cysteine 17 carries the N-palmitoyl cysteine lipid modification. Cysteine 17 carries S-diacylglycerol cysteine lipidation.

The protein localises to the cell membrane. This is an uncharacterized protein from Salmonella typhimurium (strain LT2 / SGSC1412 / ATCC 700720).